The sequence spans 411 residues: Arginine deiminase (411 aa).

Catalysis depends on cysteine 401, which acts as the Amidino-cysteine intermediate.

It belongs to the arginine deiminase family.

The protein localises to the cytoplasm. It carries out the reaction L-arginine + H2O = L-citrulline + NH4(+). It functions in the pathway amino-acid degradation; L-arginine degradation via ADI pathway; carbamoyl phosphate from L-arginine: step 1/2. This Staphylococcus aureus (strain bovine RF122 / ET3-1) protein is Arginine deiminase.